We begin with the raw amino-acid sequence, 69 residues long: Sec-independent protein translocase protein TatA (69 aa).

A helical transmembrane segment spans residues 1–21; the sequence is MFGLGGQELILILLIILLLFG.

It belongs to the TatA/E family. In terms of assembly, forms a complex with TatC.

The protein localises to the cell inner membrane. Functionally, part of the twin-arginine translocation (Tat) system that transports large folded proteins containing a characteristic twin-arginine motif in their signal peptide across membranes. TatA could form the protein-conducting channel of the Tat system. The polypeptide is Sec-independent protein translocase protein TatA (Pelodictyon phaeoclathratiforme (strain DSM 5477 / BU-1)).